Here is a 412-residue protein sequence, read N- to C-terminus: Branched-chain alpha-ketoacid dehydrogenase kinase (412 aa).

The N-terminal 30 residues, 1–30 (MILTSVLGSGPRSGSSLWPLLGSSLSLRVR), are a transit peptide targeting the mitochondrion. Ser31 is modified (phosphoserine). One can recognise a Histidine kinase domain in the interval 159 to 404 (LDDHKDVVTL…DVYLRLRHID (246 aa)). N6-acetyllysine occurs at positions 192 and 233. The ATP site is built by Asn279 and Asp315. Asn279 lines the Mg(2+) pocket. The K(+) site is built by Val328, Asp330, and Phe333. Residues Thr334 and Thr335 each contribute to the ATP site. Ser356 and Ser360 each carry phosphoserine. The ATP site is built by His364, Gly367, and Leu370. Residue Gly367 coordinates K(+).

It belongs to the PDK/BCKDK protein kinase family. Homodimer. Homotetramer. Dimerizes through interaction of two opposing nucleotide-binding domains. Interacts with E2 component of the branched-chain alpha-ketoacid dehydrogenase (BCKDH) complex. Competes with BCKDK for binding to the E2 component; this interaction is modulated by branched-chain alpha-keto acids. At steady state, BCKDH holoenzyme contains BCKDK and BCKDHA is phosphorylated. In response to high levels of branched-chain alpha-keto acids, the inhibitory BCKDK is replaced by activating PPM1K leading to BCKDHA dephosphorylation and BCAA degradation. Post-translationally, autophosphorylated. Expressed in heart and liver.

The protein localises to the mitochondrion matrix. Its subcellular location is the mitochondrion. It carries out the reaction L-seryl-[3-methyl-2-oxobutanoate dehydrogenase] + ATP = O-phospho-L-seryl-[3-methyl-2-oxobutanoate dehydrogenase] + ADP + H(+). The enzyme catalyses L-seryl-[protein] + ATP = O-phospho-L-seryl-[protein] + ADP + H(+). With respect to regulation, the ATP-ase activity is up-regulated by potassium and rubidium ions but not by sodium ions. Up-regulated in the presence of apo- or lipoylated-DBT/E2b subunit of the BCKDH complex. In terms of biological role, serine/threonine-protein kinase component of macronutrients metabolism. Forms a functional kinase and phosphatase pair with PPM1K, serving as a metabolic regulatory node that coordinates branched-chain amino acids (BCAAs) with glucose and lipid metabolism via two distinct phosphoprotein targets: mitochondrial BCKDHA subunit of the branched-chain alpha-ketoacid dehydrogenase (BCKDH) complex and cytosolic ACLY, a lipogenic enzyme of Krebs cycle. Phosphorylates and inactivates mitochondrial BCKDH complex a multisubunit complex consisting of three multimeric components each involved in different steps of BCAA catabolism: E1 composed of BCKDHA and BCKDHB, E2 core composed of DBT monomers, and E3 composed of DLD monomers. Associates with the E2 component of BCKDH complex and phosphorylates BCKDHA on Ser-333, leading to conformational changes that interrupt substrate channeling between E1 and E2 and inactivates the BCKDH complex. phosphorylates ACLY on Ser-455 in response to changes in cellular carbohydrate abundance such as occurs during fasting to feeding metabolic transition. Refeeding stimulates MLXIPL/ChREBP transcription factor, leading to increased BCKDK to PPM1K expression ratio, phosphorylation and activation of ACLY that ultimately results in the generation of malonyl-CoA and oxaloacetate immediate substrates of de novo lipogenesis and glucogenesis, respectively. Recognizes phosphosites having SxxE/D canonical motif. The polypeptide is Branched-chain alpha-ketoacid dehydrogenase kinase (Bckdk) (Rattus norvegicus (Rat)).